Here is a 488-residue protein sequence, read N- to C-terminus: 3-octaprenyl-4-hydroxybenzoate carboxy-lyase (488 aa).

Asparagine 172 contributes to the Mn(2+) binding site. Prenylated FMN-binding positions include 175–177 (IYR), 189–191 (RWL), and 194–195 (RG). Glutamate 238 contributes to the Mn(2+) binding site. Aspartate 287 serves as the catalytic Proton donor.

The protein belongs to the UbiD family. As to quaternary structure, homohexamer. Requires prenylated FMN as cofactor. The cofactor is Mn(2+).

It is found in the cell membrane. It carries out the reaction a 4-hydroxy-3-(all-trans-polyprenyl)benzoate + H(+) = a 2-(all-trans-polyprenyl)phenol + CO2. The protein operates within cofactor biosynthesis; ubiquinone biosynthesis. Catalyzes the decarboxylation of 3-octaprenyl-4-hydroxy benzoate to 2-octaprenylphenol, an intermediate step in ubiquinone biosynthesis. The chain is 3-octaprenyl-4-hydroxybenzoate carboxy-lyase from Azotobacter vinelandii (strain DJ / ATCC BAA-1303).